Consider the following 225-residue polypeptide: UPF0758 protein SO_4248 (225 aa).

An MPN domain is found at 102–224; the sequence is VLTNPDLTRD…IVSFAERGWI (123 aa). Positions 173, 175, and 186 each coordinate Zn(2+). Positions 173-186 match the JAMM motif motif; sequence HNHPSGIAEPSQAD.

Belongs to the UPF0758 family.

The polypeptide is UPF0758 protein SO_4248 (Shewanella oneidensis (strain ATCC 700550 / JCM 31522 / CIP 106686 / LMG 19005 / NCIMB 14063 / MR-1)).